The following is a 141-amino-acid chain: ATP synthase epsilon chain (141 aa).

The protein belongs to the ATPase epsilon chain family. As to quaternary structure, F-type ATPases have 2 components, CF(1) - the catalytic core - and CF(0) - the membrane proton channel. CF(1) has five subunits: alpha(3), beta(3), gamma(1), delta(1), epsilon(1). CF(0) has three main subunits: a, b and c.

The protein resides in the cell inner membrane. Functionally, produces ATP from ADP in the presence of a proton gradient across the membrane. The protein is ATP synthase epsilon chain of Burkholderia mallei (strain NCTC 10247).